The following is a 335-amino-acid chain: Twinfilin (335 aa).

ADF-H domains lie at 4-140 (SSGI…QHKL) and 176-316 (GISF…NELH). Residues 307–335 (SEESIINELHPPKVEEKKAFSKPSRPGRK) form a disordered region. Residues 316–325 (HPPKVEEKKA) are compositionally biased toward basic and acidic residues.

It belongs to the actin-binding proteins ADF family. Twinfilin subfamily. In terms of assembly, interacts with G-actin; ADP-actin form.

The protein localises to the cytoplasm. It is found in the cytoskeleton. It localises to the cell cortex. In terms of biological role, actin-binding protein involved in motile and morphological processes. Inhibits actin polymerization, likely by sequestering G-actin. This is Twinfilin (twfA) from Dictyostelium discoideum (Social amoeba).